The following is a 294-amino-acid chain: Cell division protein ZipA (294 aa).

M1 is a topological domain (periplasmic). The chain crosses the membrane as a helical span at residues 2-22; it reads EIGLREWLILIGIIVIAGILF. Residues 23–294 are Cytoplasmic-facing; that stretch reads DGWRRMRGGK…FERRALTQKR (272 aa). Residues 47–107 form a disordered region; sequence PDEEGSAEVL…GKRAAEMQPQ (61 aa). Basic and acidic residues predominate over residues 82-91; sequence AREREREQKP.

Belongs to the ZipA family. Interacts with FtsZ via their C-terminal domains.

It is found in the cell inner membrane. Its function is as follows. Essential cell division protein that stabilizes the FtsZ protofilaments by cross-linking them and that serves as a cytoplasmic membrane anchor for the Z ring. Also required for the recruitment to the septal ring of downstream cell division proteins. The sequence is that of Cell division protein ZipA from Pseudomonas putida (strain W619).